Reading from the N-terminus, the 243-residue chain is Small ribosomal subunit protein uS3 (243 aa).

Residues 22–93 (LNEFLTRELA…SVELYAEKVA (72 aa)) form the KH type-2 domain. A disordered region spans residues 195–243 (QQGKNGPKKPQPDHILVTEPKDEPAPLEPTSDIRSLAPAPLPQPVAAVA).

The protein belongs to the universal ribosomal protein uS3 family.

This is Small ribosomal subunit protein uS3 (RpS3) from Manduca sexta (Tobacco hawkmoth).